A 162-amino-acid polypeptide reads, in one-letter code: Cyclic pyranopterin monophosphate synthase (162 aa).

Residues 75–77 (MCH) and 116–117 (ME) contribute to the substrate site. Residue D131 is part of the active site.

This sequence belongs to the MoaC family. Homohexamer; trimer of dimers.

It catalyses the reaction (8S)-3',8-cyclo-7,8-dihydroguanosine 5'-triphosphate = cyclic pyranopterin phosphate + diphosphate. The protein operates within cofactor biosynthesis; molybdopterin biosynthesis. Catalyzes the conversion of (8S)-3',8-cyclo-7,8-dihydroguanosine 5'-triphosphate to cyclic pyranopterin monophosphate (cPMP). The protein is Cyclic pyranopterin monophosphate synthase of Staphylococcus epidermidis (strain ATCC 35984 / DSM 28319 / BCRC 17069 / CCUG 31568 / BM 3577 / RP62A).